Here is a 336-residue protein sequence, read N- to C-terminus: Iron(3+)-hydroxamate import system permease protein FhuG (336 aa).

A run of 9 helical transmembrane segments spans residues 9–29 (LIVM…SLNL), 63–83 (IILS…LQSV), 91–111 (PGIL…IYFF), 124–144 (FMLP…IYIL), 155–175 (LILV…IFQL), 193–213 (IWGA…ILLL), 245–265 (ILLL…GGIA), 285–305 (TLIP…DTLA), and 313–333 (EIPV…YLLM).

Belongs to the binding-protein-dependent transport system permease family. FecCD subfamily. As to quaternary structure, the complex is composed of an ATP-binding protein (FhuC), two transmembrane proteins (FhuB and FhuG) and a solute-binding protein (FhuD or YxeB).

The protein resides in the cell membrane. In terms of biological role, part of the ABC transporter complex FhuBGCD involved in iron(3+)-hydroxamate import. Responsible for the translocation of the substrate across the membrane. The chain is Iron(3+)-hydroxamate import system permease protein FhuG (fhuG) from Bacillus subtilis (strain 168).